Reading from the N-terminus, the 74-residue chain is RNA-binding protein Hfq (74 aa).

A Sm domain is found at 9 to 69; sequence DQFLNQLRKE…ISTFMPQKNV (61 aa).

It belongs to the Hfq family. Homohexamer.

Functionally, RNA chaperone that binds small regulatory RNA (sRNAs) and mRNAs to facilitate mRNA translational regulation in response to envelope stress, environmental stress and changes in metabolite concentrations. Also binds with high specificity to tRNAs. In Bacillus cytotoxicus (strain DSM 22905 / CIP 110041 / 391-98 / NVH 391-98), this protein is RNA-binding protein Hfq.